The primary structure comprises 413 residues: CinA-like protein (413 aa).

The protein belongs to the CinA family.

The sequence is that of CinA-like protein from Geobacter sulfurreducens (strain ATCC 51573 / DSM 12127 / PCA).